An 87-amino-acid chain; its full sequence is Putative defensin-like protein 235 (87 aa).

Residues 1 to 26 (MRSATFFLVSCVLMSFVLSHVKEVEA) form the signal peptide. Disulfide bonds link Cys-46/Cys-73, Cys-54/Cys-82, and Cys-71/Cys-84.

The protein belongs to the DEFL family.

It is found in the secreted. The polypeptide is Putative defensin-like protein 235 (SCRL26) (Arabidopsis thaliana (Mouse-ear cress)).